The chain runs to 358 residues: MSHSVEYIIQHIPPVDTSLAGAAQAHLDNLTKPRGSLGRLEELALRLYCIQGGDTPLAADPARIYTIAGDHGVAAEGVSPFPQEVTRQMVLNFLSNGAGINVLCNTVGCEQFVVDAGSCGGAYPEHPRLIQRKIHPGTASIAQGPAMTAEQCRQALQLGIDLAGMAREAGCRTVGTGEMGISNTTPSTALYCAYLGLDPAGITGPGAGITPDLVKHKTDIIRRALAVNAGAVQSQNAVDILAALGGYEIAALTGLILGAAYHRMAVLVDGFISTAAWTAAWKICPAVSDYSFFSHASAEAGHKTALRSMGIEPLHDLGLRLGEGTGAALTLFLLRSAAAIFNDMATFSSAGVATQSSC.

The active-site Proton acceptor is E323.

This sequence belongs to the CobT family.

It catalyses the reaction 5,6-dimethylbenzimidazole + nicotinate beta-D-ribonucleotide = alpha-ribazole 5'-phosphate + nicotinate + H(+). It functions in the pathway nucleoside biosynthesis; alpha-ribazole biosynthesis; alpha-ribazole from 5,6-dimethylbenzimidazole: step 1/2. In terms of biological role, catalyzes the synthesis of alpha-ribazole-5'-phosphate from nicotinate mononucleotide (NAMN) and 5,6-dimethylbenzimidazole (DMB). The chain is Nicotinate-nucleotide--dimethylbenzimidazole phosphoribosyltransferase from Oleidesulfovibrio alaskensis (strain ATCC BAA-1058 / DSM 17464 / G20) (Desulfovibrio alaskensis).